The following is a 184-amino-acid chain: Large ribosomal subunit protein uL10 (184 aa).

This sequence belongs to the universal ribosomal protein uL10 family. In terms of assembly, part of the ribosomal stalk of the 50S ribosomal subunit. The N-terminus interacts with L11 and the large rRNA to form the base of the stalk. The C-terminus forms an elongated spine to which L12 dimers bind in a sequential fashion forming a multimeric L10(L12)X complex.

Forms part of the ribosomal stalk, playing a central role in the interaction of the ribosome with GTP-bound translation factors. The chain is Large ribosomal subunit protein uL10 from Gluconobacter oxydans (strain 621H) (Gluconobacter suboxydans).